The sequence spans 374 residues: Erythronate-4-phosphate dehydrogenase (374 aa).

Substrate contacts are provided by serine 45 and threonine 67. Position 147 (aspartate 147) interacts with NAD(+). The active site involves arginine 208. Aspartate 232 is an NAD(+) binding site. Glutamate 237 is a catalytic residue. The Proton donor role is filled by histidine 254. Glycine 257 contacts NAD(+).

It belongs to the D-isomer specific 2-hydroxyacid dehydrogenase family. PdxB subfamily. As to quaternary structure, homodimer.

It localises to the cytoplasm. The catalysed reaction is 4-phospho-D-erythronate + NAD(+) = (R)-3-hydroxy-2-oxo-4-phosphooxybutanoate + NADH + H(+). Its pathway is cofactor biosynthesis; pyridoxine 5'-phosphate biosynthesis; pyridoxine 5'-phosphate from D-erythrose 4-phosphate: step 2/5. Catalyzes the oxidation of erythronate-4-phosphate to 3-hydroxy-2-oxo-4-phosphonooxybutanoate. This chain is Erythronate-4-phosphate dehydrogenase, found in Pseudoalteromonas atlantica (strain T6c / ATCC BAA-1087).